A 497-amino-acid chain; its full sequence is Glycine receptor subunit beta (497 aa).

Residues Met1–Ser22 form the signal peptide. Residues Lys23–Phe268 are Extracellular-facing. Residue Asn54 is glycosylated (N-linked (GlcNAc...) asparagine). Positions 108 and 174 each coordinate glycine. An intrachain disulfide couples Cys183 to Cys197. Asn242 is a glycosylation site (N-linked (GlcNAc...) asparagine). Cys243 and Cys255 are oxidised to a cystine. Position 250 (Thr250) interacts with glycine. A helical membrane pass occupies residues Tyr269–Trp289. Residues Ile290 to Ala294 are Cytoplasmic-facing. The helical transmembrane segment at Ser295 to Thr315 threads the bilayer. Over Leu316–Lys327 the chain is Extracellular. The chain crosses the membrane as a helical span at residues Ala328 to Val349. Over Val350–Arg472 the chain is Cytoplasmic. Thr391 carries the phosphothreonine modification. The helical transmembrane segment at Ile473–Tyr496 threads the bilayer.

The protein belongs to the ligand-gated ion channel (TC 1.A.9) family. Glycine receptor (TC 1.A.9.3) subfamily. GLRB sub-subfamily. Forms heteropentamers with glycin receptor alpha subunits. Heteropentamers with GLRA1 can be composed of two GLRA1 and three GLRB subunits, or three GLRA1 and two GLRB subunits, or four GLRA1 subunits and one GLRB subunit. Forms heteropentamers with GLRA2. Functional GLRB-GLRA2 heteropentamers contain four GLRA2 subunits and one GLRB subunit, although alternative subunit composition cannot be excluded. Forms a heteropentamer with GLRA3. Interacts with GPHN.

Its subcellular location is the postsynaptic cell membrane. It localises to the synapse. The protein localises to the cell projection. The protein resides in the dendrite. It is found in the cell membrane. Its subcellular location is the cytoplasm. The enzyme catalyses chloride(in) = chloride(out). With respect to regulation, channel opening is triggered by extracellular glycine. Heteropentameric channels composed of GLRB and GLRA1 are activated by lower glycine levels than homopentameric GLRA1. Subunit of heteromeric glycine-gated chloride channels. Plays an important role in the down-regulation of neuronal excitability. Contributes to the generation of inhibitory postsynaptic currents. This chain is Glycine receptor subunit beta (GLRB), found in Homo sapiens (Human).